A 556-amino-acid polypeptide reads, in one-letter code: Beta-caryophyllene synthase TPS9FN (556 aa).

Residues Arg-273, Asp-310, Asp-314, Arg-451, and Asp-454 each coordinate (2E,6E)-farnesyl diphosphate. 2 residues coordinate Mg(2+): Asp-310 and Asp-314. The DDXXD motif motif lies at Asp-310–Asp-314. 3 residues coordinate Mg(2+): Asp-454, Ser-458, and Glu-462.

This sequence belongs to the terpene synthase family. Tpsb subfamily. Mg(2+) is required as a cofactor. It depends on Mn(2+) as a cofactor. As to expression, expressed in glandular trichomes two to four weeks after flowering onset.

It catalyses the reaction (2E,6E)-farnesyl diphosphate = (-)-(E)-beta-caryophyllene + diphosphate. The enzyme catalyses (2E,6E)-farnesyl diphosphate = alpha-humulene + diphosphate. The protein operates within secondary metabolite biosynthesis; terpenoid biosynthesis. Functionally, involved in sesquiterpene olefins biosynthesis, constituants of cannabinoids and terpenoids-rich resins. Catalyzes mainly the conversion of (2E)-farnesyl diphosphate to beta-caryophyllene and alpha-humulene. Can also use (2E)-geranyl diphosphate as substrate with low efficiency. This chain is Beta-caryophyllene synthase TPS9FN, found in Cannabis sativa (Hemp).